A 255-amino-acid chain; its full sequence is 3-deoxy-manno-octulosonate cytidylyltransferase (255 aa).

This sequence belongs to the KdsB family.

It localises to the cytoplasm. It carries out the reaction 3-deoxy-alpha-D-manno-oct-2-ulosonate + CTP = CMP-3-deoxy-beta-D-manno-octulosonate + diphosphate. The protein operates within nucleotide-sugar biosynthesis; CMP-3-deoxy-D-manno-octulosonate biosynthesis; CMP-3-deoxy-D-manno-octulosonate from 3-deoxy-D-manno-octulosonate and CTP: step 1/1. Its pathway is bacterial outer membrane biogenesis; lipopolysaccharide biosynthesis. Functionally, activates KDO (a required 8-carbon sugar) for incorporation into bacterial lipopolysaccharide in Gram-negative bacteria. The chain is 3-deoxy-manno-octulosonate cytidylyltransferase from Glaesserella parasuis serovar 5 (strain SH0165) (Haemophilus parasuis).